The chain runs to 395 residues: Pesticidal crystal protein Cry6Ba (395 aa).

It belongs to the cry6A endotoxin family.

Endotoxin with nematicidal activity. In Bacillus thuringiensis, this protein is Pesticidal crystal protein Cry6Ba (cry6Ba).